We begin with the raw amino-acid sequence, 155 residues long: Small ribosomal subunit protein uS7 (155 aa).

This sequence belongs to the universal ribosomal protein uS7 family. Part of the 30S ribosomal subunit. Contacts proteins S9 and S11.

In terms of biological role, one of the primary rRNA binding proteins, it binds directly to 16S rRNA where it nucleates assembly of the head domain of the 30S subunit. Is located at the subunit interface close to the decoding center, probably blocks exit of the E-site tRNA. In Pelodictyon phaeoclathratiforme (strain DSM 5477 / BU-1), this protein is Small ribosomal subunit protein uS7.